A 249-amino-acid polypeptide reads, in one-letter code: V-type proton ATPase subunit D 2 (249 aa).

Belongs to the V-ATPase D subunit family. As to quaternary structure, V-ATPase is a heteromultimeric enzyme made up of two complexes: the ATP-hydrolytic V1 complex and the proton translocation V0 complex. The V1 complex consists of three catalytic AB heterodimers that form a heterohexamer, three peripheral stalks each consisting of EG heterodimers, one central rotor including subunits D and F, and the regulatory subunits C and H. The proton translocation complex V0 consists of the proton transport subunit a, a ring of proteolipid subunits c9c'', rotary subunit d, subunits e and f, and the accessory subunits VhaAC45 and ATP6AP2.

In terms of biological role, subunit of the V1 complex of vacuolar(H+)-ATPase (V-ATPase), a multisubunit enzyme composed of a peripheral complex (V1) that hydrolyzes ATP and a membrane integral complex (V0) that translocates protons. V-ATPase is responsible for acidifying and maintaining the pH of intracellular compartments and in some cell types, is targeted to the plasma membrane, where it is responsible for acidifying the extracellular environment. The chain is V-type proton ATPase subunit D 2 (Vha36-3) from Drosophila melanogaster (Fruit fly).